The following is a 93-amino-acid chain: Small ribosomal subunit protein uS19c (93 aa).

It belongs to the universal ribosomal protein uS19 family.

It is found in the plastid. Its subcellular location is the chloroplast. Functionally, protein S19 forms a complex with S13 that binds strongly to the 16S ribosomal RNA. In Lolium perenne (Perennial ryegrass), this protein is Small ribosomal subunit protein uS19c.